The chain runs to 426 residues: Interferon regulatory factor 8 (426 aa).

The segment at residues 7–114 (GRRLRQWLIE…EPYKVYRIVP (108 aa)) is a DNA-binding region (IRF tryptophan pentad repeat).

Belongs to the IRF family. In terms of assembly, interacts (via C-terminus) with TRIM21 (via C-terminus). Interacts with the BATF-JUNB heterodimer. Interacts with BATF (via bZIP domain); the interaction is direct. Interacts with COPS2. Interacts with SPI1. Ubiquitinated. Ubiquitination by TRIM21 in macrophages, a process that is strongly increased upon interferon gamma stimulation, leds to the enhanced transcriptional activity of target cytokine genes. Ubiquitination leads to its degradation by the proteasome. Post-translationally, sumoylated with SUMO3. Desumoylated by SENP1. As to expression, predominantly expressed in lymphoid tissues.

It is found in the nucleus. Its subcellular location is the cytoplasm. Its function is as follows. Transcription factor that specifically binds to the upstream regulatory region of type I interferon (IFN) and IFN-inducible MHC class I genes (the interferon consensus sequence (ICS)). Can both act as a transcriptional activator or repressor. Plays a negative regulatory role in cells of the immune system. Involved in CD8(+) dendritic cell differentiation by forming a complex with the BATF-JUNB heterodimer in immune cells, leading to recognition of AICE sequence (5'-TGAnTCA/GAAA-3'), an immune-specific regulatory element, followed by cooperative binding of BATF and IRF8 and activation of genes. Required for the development of plasmacytoid dendritic cells (pDCs), which produce most of the type I IFN in response to viral infection. Positively regulates macroautophagy in dendritic cells. Acts as a transcriptional repressor of osteoclast differentiation factors such as NFATC1 and EEIG1. This Homo sapiens (Human) protein is Interferon regulatory factor 8.